The following is a 1551-amino-acid chain: MSIEKVSILGKESIHVGYGIQSHIVEETIKCLASSTYVIISDTNMSKTPTYEKLQDSFQKELAKQRPQSRLLTYLIPPGENHKNRETKAEVEDFLLQQGCTRDTVILAVGGGVIGDMIGFVAATFMRGVRVVQVPTTLLSMVDSSVGGKTAIDTELGKNFIGAFHQPEFVFCDVSFLQTLPKRQLINGMAEVVKTAAIWDETEFTRLEGFAKRFLAEISAPTPNLESIKDELIKTVLGSVRVKAFVVSADEKEGGLRNLLNFGHTIGHAIEAILTPEALHGECVSIGMIKEAELSRYLGILPPSAVARLSKCLAAYGLPISVDEKIFSKIIGAKKNNLKIDSLIKKMLIDKKNDGSKIRCVLLESIGKCYESKAHQIFKEDIQVVMTDEVFVHPFANRHPESVSITPPGSKSISNRALILAALGEGTTRIKNLLHSDDTKHMLDAVVLMKGATVSFEDSGDTVVVQGHGGKLFACKEEIYLGNAGTASRFLTAVAALVNSTQDEKSVTLTGNARMQERPIAALVDALTTNGSKVDYLNKQGSLPLKIEAGNGFKGGRIELAATTSSQYVSAILMCAPYAEKEVTLSLVGGKPISQLYIDMTIAMMKDFGVDVTKSETEEYTYHIPKAVYQNPQEYVVESDASSATYPLAFAALTNSSCTIPNIGSSSLQGDARFAVDVLKPMGCTVEQTSKSTTVTGPPIGTLKALPEIDMEPMTDAFLTASVVAAVSQGTTTISGIANQRVKECNRIKAMVDELAKFGVSADETEDGISIHGVQLKDLKTPGGRGVKTYDDHRVAMSFSLLAGLCKDPVLIQERSTTGKTWPGWWDVLHSKFNAKLEGHEYIRQRSGSLRNGDRSIVIIGMRAAGKTTLSRWLAEHLNFKLLDLDQYLEKKLAVDIKLLVKEKGWDYFREKETEVLNECLEKFGKGHILATGGGIVEGEKPREALKNYTKSGGIVLHLHRDLKETVNFLSKDPTRPAYSDDIEEVWKRREKWYHECSNYHFYSTHCTSEAEFANLKLVFAKFVSKITGDDTFVLPATRSTFVTLTYPDLRKVPSLIKDVSETSNAVELRVDLLANQETAYIAEQIGLLRSVATDLPILYTVRTKSQCGQYPDEDEEGMRKLLMFGLKMGVDIIDLQLISSPSTIAEVISKRGHTKIIASHHDFTGDLKWDNVEWKNKYAQGVSIDADFVKLVGMAKTFDDNLLLENFRRQNTEKPLIGINMGPQGKLSRVLNKVLTPVTHELITDKPIGVGQLSLKEINQALFQIGGLLEKEFWVVGFPVSHSRSPALHNAAYAALGLPYKFDIFETDDAEKVYTQLMQKPTFGGLAVTIPLKLDIKKYCTELSESAKLIGAVNTVTPIADGRKGFLGDNTDWIGIANSFKKADFALASGVTNGLVVGGGGTSRAAIFALHSLGCQKIYLLNRTESKLQDLVDSFPDYDLEILLEKNASSVSIGLVVSCVPGDKALDETLMKKLDGVLSNNKGDKQTRPLLLEAAYKPRVTPIMELAKEKYDWTVIPGVEMLVNQGEAQFKLHTGYTAPYKVIHSAVLNE.

Positions 1–379 (MSIEKVSILG…YESKAHQIFK (379 aa)) are 3-dehydroquinate synthase. Residues 42-44 (DTN), 80-83 (ENHK), 111-113 (GGV), and aspartate 116 each bind NAD(+). Residue arginine 127 participates in 7-phospho-2-dehydro-3-deoxy-D-arabino-heptonate binding. Position 136 to 137 (136 to 137 (TT)) interacts with NAD(+). 7-phospho-2-dehydro-3-deoxy-D-arabino-heptonate-binding residues include aspartate 143 and lysine 149. Lysine 158 provides a ligand contact to NAD(+). Asparagine 159 provides a ligand contact to 7-phospho-2-dehydro-3-deoxy-D-arabino-heptonate. NAD(+) contacts are provided by residues 176 to 179 (FLQT) and asparagine 187. Glutamate 191 contacts Zn(2+). Residues 191–194 (EVVK) and lysine 243 contribute to the 7-phospho-2-dehydro-3-deoxy-D-arabino-heptonate site. Glutamate 253 functions as the Proton acceptor; for 3-dehydroquinate synthase activity in the catalytic mechanism. 7-phospho-2-dehydro-3-deoxy-D-arabino-heptonate-binding positions include 257-261 (RNLLN) and histidine 264. Histidine 264 is a Zn(2+) binding site. Residue histidine 268 is the Proton acceptor; for 3-dehydroquinate synthase activity of the active site. 7-phospho-2-dehydro-3-deoxy-D-arabino-heptonate is bound by residues histidine 280 and lysine 351. Position 280 (histidine 280) interacts with Zn(2+). The segment at 392–835 (VHPFANRHPE…WDVLHSKFNA (444 aa)) is EPSP synthase. Residues 854–1044 (DRSIVIIGMR…LPATRSTFVT (191 aa)) are shikimate kinase. 861 to 868 (GMRAAGKT) is an ATP binding site. The 3-dehydroquinase stretch occupies residues 1045 to 1258 (LTYPDLRKVP…IGVGQLSLKE (214 aa)). Histidine 1162 serves as the catalytic Proton acceptor; for 3-dehydroquinate dehydratase activity. Lysine 1191 (schiff-base intermediate with substrate; for 3-dehydroquinate dehydratase activity) is an active-site residue. Residues 1271 to 1551 (EKEFWVVGFP…KVIHSAVLNE (281 aa)) are shikimate dehydrogenase.

The protein in the N-terminal section; belongs to the sugar phosphate cyclases superfamily. Dehydroquinate synthase family. In the 2nd section; belongs to the EPSP synthase family. It in the 3rd section; belongs to the shikimate kinase family. This sequence in the 4th section; belongs to the type-I 3-dehydroquinase family. The protein in the C-terminal section; belongs to the shikimate dehydrogenase family. As to quaternary structure, homodimer. Requires Zn(2+) as cofactor.

The protein resides in the cytoplasm. It carries out the reaction 7-phospho-2-dehydro-3-deoxy-D-arabino-heptonate = 3-dehydroquinate + phosphate. It catalyses the reaction 3-dehydroquinate = 3-dehydroshikimate + H2O. The catalysed reaction is shikimate + NADP(+) = 3-dehydroshikimate + NADPH + H(+). The enzyme catalyses shikimate + ATP = 3-phosphoshikimate + ADP + H(+). It carries out the reaction 3-phosphoshikimate + phosphoenolpyruvate = 5-O-(1-carboxyvinyl)-3-phosphoshikimate + phosphate. The protein operates within metabolic intermediate biosynthesis; chorismate biosynthesis; chorismate from D-erythrose 4-phosphate and phosphoenolpyruvate: step 2/7. It participates in metabolic intermediate biosynthesis; chorismate biosynthesis; chorismate from D-erythrose 4-phosphate and phosphoenolpyruvate: step 3/7. Its pathway is metabolic intermediate biosynthesis; chorismate biosynthesis; chorismate from D-erythrose 4-phosphate and phosphoenolpyruvate: step 4/7. It functions in the pathway metabolic intermediate biosynthesis; chorismate biosynthesis; chorismate from D-erythrose 4-phosphate and phosphoenolpyruvate: step 5/7. The protein operates within metabolic intermediate biosynthesis; chorismate biosynthesis; chorismate from D-erythrose 4-phosphate and phosphoenolpyruvate: step 6/7. Its function is as follows. The AROM polypeptide catalyzes 5 consecutive enzymatic reactions in prechorismate polyaromatic amino acid biosynthesis. This chain is Pentafunctional AROM polypeptide 2, found in Lodderomyces elongisporus (strain ATCC 11503 / CBS 2605 / JCM 1781 / NBRC 1676 / NRRL YB-4239) (Yeast).